The sequence spans 674 residues: DNA mismatch repair protein MutL (674 aa).

The protein belongs to the DNA mismatch repair MutL/HexB family.

Its function is as follows. This protein is involved in the repair of mismatches in DNA. It is required for dam-dependent methyl-directed DNA mismatch repair. May act as a 'molecular matchmaker', a protein that promotes the formation of a stable complex between two or more DNA-binding proteins in an ATP-dependent manner without itself being part of a final effector complex. The sequence is that of DNA mismatch repair protein MutL from Clostridium perfringens (strain 13 / Type A).